A 401-amino-acid chain; its full sequence is Ribosomal RNA large subunit methyltransferase G (401 aa).

This sequence belongs to the methyltransferase superfamily. RlmG family.

Its subcellular location is the cytoplasm. It carries out the reaction guanosine(1835) in 23S rRNA + S-adenosyl-L-methionine = N(2)-methylguanosine(1835) in 23S rRNA + S-adenosyl-L-homocysteine + H(+). Functionally, specifically methylates the guanine in position 1835 (m2G1835) of 23S rRNA. The sequence is that of Ribosomal RNA large subunit methyltransferase G from Shewanella loihica (strain ATCC BAA-1088 / PV-4).